The sequence spans 668 residues: Ecdysone oxidase (668 aa).

FAD contacts are provided by residues 137 to 140 (NHMV), Val-270, and 536 to 537 (WH). The active-site Proton acceptor is His-537.

This sequence belongs to the GMC oxidoreductase family. FAD is required as a cofactor.

The catalysed reaction is ecdysone + O2 = 3-dehydroecdysone + H2O2. In terms of biological role, involved in the inactivation of ecdysteroid molting hormones by converting ecdysteroids into 3-dehydroecdysteroids. This chain is Ecdysone oxidase, found in Bombyx mori (Silk moth).